The sequence spans 229 residues: Secreted RxLR effector protein PITG_22926 (229 aa).

The N-terminal stretch at 1–23 (MRCNHTLCVVAITFLVSWSQTLS) is a signal peptide. The short motif at 34–45 (PLVRSVSATEER) is the RxLR-dEER element.

This sequence belongs to the RxLR effector family.

It localises to the secreted. The protein localises to the host nucleus. Functionally, secreted effector that acts as a RNA silencing suppressor, probably by inhibiting the biogenesis of small RNAs in the host plant, to manipulate host immune responses and promote Phytophthora infection. The polypeptide is Secreted RxLR effector protein PITG_22926 (Phytophthora infestans (strain T30-4) (Potato late blight agent)).